A 448-amino-acid chain; its full sequence is uncharacterized protein (448 aa).

The segment covering 187–198 has biased composition (basic and acidic residues); sequence SKGDRGDADDRG. Disordered stretches follow at residues 187–221, 243–270, and 291–361; these read SKGD…LPTR, LQVP…GATM, and LSGL…LPNG. Residues 243–261 show a composition bias toward low complexity; sequence LQVPGGTSAAIPSASSTPS. Over residues 307 to 334 the composition is skewed to basic and acidic residues; the sequence is FDERGQEVRDPADYEHANEPDERRADDR.

It to M.tuberculosis Rv0025 and Rv0739.

This is an uncharacterized protein from Mycobacterium tuberculosis (strain CDC 1551 / Oshkosh).